The following is a 1041-amino-acid chain: Sodium/potassium-transporting ATPase subunit alpha (1041 aa).

A run of 4 helical transmembrane segments spans residues 115–135, 147–167, 312–332, and 338–358; these read FGGFAMLLWIGAILCFVAYSI, NLYLGIVLSAVVIVTGIFSYY, LITGVAVFLGVTFFVIAFILG, and AVIFLIGIIVANVPEGLLATV. The active-site 4-aspartylphosphate intermediate is D394. K526 contacts ATP. The next 4 helical transmembrane spans lie at 808 to 828, 870 to 890, 935 to 955, and 970 to 990; these read FLAFILCDIPLPLGTVTILCI, MAYGQIGMIQAAAGFFVYFVI, TCHTAFFISIVVVQWADLIIC, and WALNFGLVFETVLAAFLSYCP.

Belongs to the cation transport ATPase (P-type) (TC 3.A.3) family. Type IIC subfamily. The sodium/potassium-transporting ATPase is composed of a catalytic alpha subunit, an auxiliary non-catalytic beta subunit and an additional regulatory subunit. In terms of tissue distribution, high levels are found in some adult tissues: Malpighian tubules, indirect flight muscles, tubular leg muscles and throughout the nervous system (brain, optic lobes, retina and ventral thoracic neuromere). Lower levels are detected at the posterior end where the reproductive organs and rectum are located.

It is found in the cell membrane. It carries out the reaction K(+)(out) + Na(+)(in) + ATP + H2O = K(+)(in) + Na(+)(out) + ADP + phosphate + H(+). This is the catalytic component of the active enzyme, which catalyzes the hydrolysis of ATP coupled with the exchange of sodium and potassium ions across the plasma membrane. This action creates the electrochemical gradient of sodium and potassium ions, providing the energy for active transport of various nutrients. The protein is Sodium/potassium-transporting ATPase subunit alpha (Atpalpha) of Drosophila melanogaster (Fruit fly).